The chain runs to 397 residues: Lysophospholipid transporter LplT (397 aa).

11 consecutive transmembrane segments (helical) span residues 21-41, 53-73, 91-111, 139-159, 164-184, 229-249, 257-277, 281-301, 304-324, 344-364, and 372-392; these read SAQF…LALL, ILQM…GQVA, LGAA…LVGI, LMES…GVLA, LAAL…NLFI, WGAG…ALGI, YLNA…AKLV, TVRR…FFSL, ALLP…FFIV, IAVQ…LYSL, and VVGI…GLWI.

Belongs to the major facilitator superfamily. LplT (TC 2.A.1.42) family.

Its subcellular location is the cell inner membrane. Catalyzes the facilitated diffusion of 2-acyl-glycero-3-phosphoethanolamine (2-acyl-GPE) into the cell. This chain is Lysophospholipid transporter LplT, found in Enterobacter sp. (strain 638).